A 1491-amino-acid chain; its full sequence is Pleckstrin homology domain-containing family H member 2 (1491 aa).

A coiled-coil region spans residues 19-177; that stretch reads ALEAQLMKFR…ELQEKKISCV (159 aa). Disordered stretches follow at residues 232 to 435, 506 to 546, and 612 to 668; these read AEKP…PFQP, DDGL…LHRF, and SSSP…SDYA. Over residues 253-264 the composition is skewed to polar residues; it reads TSCSSEQNQKTR. Positions 374–385 are enriched in basic and acidic residues; the sequence is KEQDSSSDELNK. The span at 392–406 shows a compositional bias: polar residues; the sequence is LDYTSSSSEANTPSP. Low complexity predominate over residues 657-666; the sequence is SDSSAASESD. PH domains follow at residues 702 to 796 and 810 to 918; these read PLEK…SVLR and KPAV…VAAG. Residues 954–1109 enclose the MyTH4 domain; sequence HSKEGILSPL…PSRMEILSTL (156 aa). The FERM domain maps to 1120–1449; sequence FSIPVHFMNG…SYINSFHQQK (330 aa). A disordered region spans residues 1466 to 1491; sequence QAPQARVMGSQPPLSNSRPTKGPTLL.

In terms of assembly, self-associates. Interacts with TGFB1I1. Expressed in the kidney and testis. Expressed in the kidney exclusively by glomerular podocytes.

It localises to the cytoplasm. The protein resides in the cytoskeleton. Its subcellular location is the cell membrane. It is found in the cell projection. The protein localises to the lamellipodium. Its function is as follows. In the kidney glomerulus may play a role in linking podocyte foot processes to the glomerular basement membrane. May be involved in stabilization of F-actin by attenuating its depolymerization. Can recruit TGFB1I1 from focal adhesions to podocyte lamellipodia. The protein is Pleckstrin homology domain-containing family H member 2 (Plekhh2) of Mus musculus (Mouse).